A 272-amino-acid polypeptide reads, in one-letter code: Ribonuclease HII (272 aa).

The RNase H type-2 domain maps to 87–272 (KYVAGVDEVG…HRMSFLKNIL (186 aa)). Residues aspartate 93, glutamate 94, and aspartate 188 each coordinate a divalent metal cation.

Belongs to the RNase HII family. It depends on Mn(2+) as a cofactor. Requires Mg(2+) as cofactor.

It localises to the cytoplasm. It catalyses the reaction Endonucleolytic cleavage to 5'-phosphomonoester.. Its function is as follows. Endonuclease that specifically degrades the RNA of RNA-DNA hybrids. This chain is Ribonuclease HII, found in Clostridium perfringens (strain SM101 / Type A).